The following is a 152-amino-acid chain: SsrA-binding protein (152 aa).

It belongs to the SmpB family.

It is found in the cytoplasm. Its function is as follows. Required for rescue of stalled ribosomes mediated by trans-translation. Binds to transfer-messenger RNA (tmRNA), required for stable association of tmRNA with ribosomes. tmRNA and SmpB together mimic tRNA shape, replacing the anticodon stem-loop with SmpB. tmRNA is encoded by the ssrA gene; the 2 termini fold to resemble tRNA(Ala) and it encodes a 'tag peptide', a short internal open reading frame. During trans-translation Ala-aminoacylated tmRNA acts like a tRNA, entering the A-site of stalled ribosomes, displacing the stalled mRNA. The ribosome then switches to translate the ORF on the tmRNA; the nascent peptide is terminated with the 'tag peptide' encoded by the tmRNA and targeted for degradation. The ribosome is freed to recommence translation, which seems to be the essential function of trans-translation. In Rickettsia conorii (strain ATCC VR-613 / Malish 7), this protein is SsrA-binding protein.